The chain runs to 957 residues: Glycine dehydrogenase (decarboxylating) (957 aa).

Lys708 carries the N6-(pyridoxal phosphate)lysine modification.

The protein belongs to the GcvP family. The glycine cleavage system is composed of four proteins: P, T, L and H. The cofactor is pyridoxal 5'-phosphate.

The enzyme catalyses N(6)-[(R)-lipoyl]-L-lysyl-[glycine-cleavage complex H protein] + glycine + H(+) = N(6)-[(R)-S(8)-aminomethyldihydrolipoyl]-L-lysyl-[glycine-cleavage complex H protein] + CO2. Functionally, the glycine cleavage system catalyzes the degradation of glycine. The P protein binds the alpha-amino group of glycine through its pyridoxal phosphate cofactor; CO(2) is released and the remaining methylamine moiety is then transferred to the lipoamide cofactor of the H protein. The sequence is that of Glycine dehydrogenase (decarboxylating) from Cronobacter sakazakii (strain ATCC BAA-894) (Enterobacter sakazakii).